Consider the following 872-residue polypeptide: MSSPPREHSPMMRQYLDVKERYPDYLLLFRVGDFYETFFDDAKEVSSALNIVLTRRSNGSSSEVPMAGFPHHASEGYIARLVKKGYKVAVCDQVEDPSEAKGIVRREITDIVTPGITYSDKILDDRHNNYLCALALLKEGRRVVAGAAFIDVTTAEFKIAELLPEEVADFVRSLHPAELLIARKEKERFEPVRKEFPPDMVVTELDDWMFGEDQASAVLARQFKTHSLKGFGIHGNSAGKVAAGVILQYLEETRQNRLHYITRIGTLQNTDYMTLDLQTRRNLEIISSMQDGTINGSLLQVIDRTANPMGARLIRRWLQSPLKRLEDIALRLDAVEEFKDFSPLRREVHGHLSEINDLERVLSRIATFRSIPREMRQFGSALSKIPLLKEALLQTTTARLQALGRSLVEMPELVALIEKAVDPEAGASMRDGGYIRAGYHQELDELRTIASTAKDRLLEIQQEERARTSISSLKVQFNKVFGYYIEISKSNLDKVPDYYEKKQTLVNAERFTIPALKEYEAKILNAEEKSIVLEQRLFHDLSLLIAEQAALVQTNAAVIAEIDCLASFAAVAEEYGYCKPEVAGHDRLLVTGGRHPVLERMMSTDDPYVSNDLLFDRKQRLLIITGPNMAGKSSYLRQAGLIVLLAQAGSFVPAQKAEIGLVDRIFTRVGASDNLASGESTFLVEMNEAASILNNATSKSLLLLDEIGRGTSTSDGMSIAWSMSEFIHDSIGARTLFATHYHELAELETRLQGVVNYNATVIETAEKVIFLRKIVRGASDNSYGIEVARMAGMPQEVIVRAKEILAGMEKREIDVSGIKQPSIESMQISLFEEADSRLRTAIENLDLDRLTPLDALIELKKLQDLALKGCGR.

626–633 contacts ATP; it reads GPNMAGKS.

Belongs to the DNA mismatch repair MutS family.

Its function is as follows. This protein is involved in the repair of mismatches in DNA. It is possible that it carries out the mismatch recognition step. This protein has a weak ATPase activity. In Chlorobium phaeobacteroides (strain DSM 266 / SMG 266 / 2430), this protein is DNA mismatch repair protein MutS.